The chain runs to 166 residues: Ureidoglycolate lyase (166 aa).

The protein belongs to the ureidoglycolate lyase family. As to quaternary structure, homodimer. The cofactor is Ni(2+).

It catalyses the reaction (S)-ureidoglycolate = urea + glyoxylate. It participates in nitrogen metabolism; (S)-allantoin degradation. Functionally, catalyzes the catabolism of the allantoin degradation intermediate (S)-ureidoglycolate, generating urea and glyoxylate. Involved in the utilization of allantoin as nitrogen source. This Rhizobium etli (strain ATCC 51251 / DSM 11541 / JCM 21823 / NBRC 15573 / CFN 42) protein is Ureidoglycolate lyase.